The sequence spans 507 residues: MSMKFMAALAFLALQLIVMAAGEDQSAQIMLDSDTKQYHRSSRNLRKRVHHARHDVAIVFNVEHYGAVGDGKHDSTDAFEKTWNAACNKLSAVFLVPANKKFVVNNLVFYGPCQPHFSFKVDGTIAAYPDPAKWKNSKIWMHFARLTDFNLMGTGVIDGQGNRWWSDQCKTINGRTVCNDKGRPTAIKIDFSKSVTVKELTLTNSPEFHLVFGECDGVKIQGIKIKAPRDSPNTDGIDIFASKRFEIEKCTIGTGDDCVAVGTGSSNITIKDLTCGPGHGMSIGSLGKGNSRSEVSFVHLDGAKFIDTQNGLRIKTWQGGSGLASHITYENVEMINAENPILINQFYCTSAAACKNQRSAVKIQDVTFKNIHGTSATTAAIQLMCSDSVPCSNIKLSNVFLKLTSGKVATCVNKNANGYYTNPLNPSCKSLHPGRTPKELELHQKPTTLLMDEKMGASLNSSPPNCKNKCKGCQPCKPKLIIVHPNQPEDYYPQRWVCSCHNKIYNP.

The first 20 residues, 1–20 (MSMKFMAALAFLALQLIVMA), serve as a signal peptide directing secretion. The propeptide occupies 21 to 54 (AGEDQSAQIMLDSDTKQYHRSSRNLRKRVHHARH). 6 PbH1 repeats span residues 215-241 (CDGV…DIFA), 242-263 (SKRF…AVGT), 265-285 (SSNI…SIGS), 295-316 (VSFV…RIKT), 324-345 (ASHI…LINQ), and 358-385 (RSAV…QLMC). Aspartate 256 functions as the Proton donor in the catalytic mechanism. Asparagine 267 carries an N-linked (GlcNAc...) asparagine glycan. Residue histidine 279 is part of the active site.

It belongs to the glycosyl hydrolase 28 family.

It localises to the secreted. The protein resides in the cell wall. It carries out the reaction (1,4-alpha-D-galacturonosyl)n+m + H2O = (1,4-alpha-D-galacturonosyl)n + (1,4-alpha-D-galacturonosyl)m.. This chain is Polygalacturonase (JNA2), found in Juniperus ashei (Ozark white cedar).